A 239-amino-acid polypeptide reads, in one-letter code: tRNA (guanine-N(1)-)-methyltransferase (239 aa).

S-adenosyl-L-methionine contacts are provided by residues glycine 110 and 130-135 (VGDYVL).

The protein belongs to the RNA methyltransferase TrmD family. Homodimer.

It localises to the cytoplasm. It catalyses the reaction guanosine(37) in tRNA + S-adenosyl-L-methionine = N(1)-methylguanosine(37) in tRNA + S-adenosyl-L-homocysteine + H(+). In terms of biological role, specifically methylates guanosine-37 in various tRNAs. This is tRNA (guanine-N(1)-)-methyltransferase from Borrelia turicatae (strain 91E135).